The primary structure comprises 205 residues: Endoplasmic reticulum membrane protein complex subunit 10 (205 aa).

An N-terminal signal peptide occupies residues 1-17; the sequence is MLVRLLRVILLASMVFC. At 18-172 the chain is on the lumenal side; it reads ADILQLSYSD…VKEVSWFQKN (155 aa). N47 carries N-linked (GlcNAc...) asparagine glycosylation. The helical transmembrane segment at 173–190 threads the bilayer; sequence WKMLLLGLLIYNFVAGSA. Topologically, residues 191–205 are cytoplasmic; the sequence is KKQQQGGAGADQKTE.

Component of the ER membrane protein complex (EMC).

Its subcellular location is the endoplasmic reticulum membrane. In terms of biological role, part of the endoplasmic reticulum membrane protein complex (EMC) that enables the energy-independent insertion into endoplasmic reticulum membranes of newly synthesized membrane proteins. Preferentially accommodates proteins with transmembrane domains that are weakly hydrophobic or contain destabilizing features such as charged and aromatic residues. Involved in the cotranslational insertion of multi-pass membrane proteins in which stop-transfer membrane-anchor sequences become ER membrane spanning helices. It is also required for the post-translational insertion of tail-anchored/TA proteins in endoplasmic reticulum membranes. By mediating the proper cotranslational insertion of N-terminal transmembrane domains in an N-exo topology, with translocated N-terminus in the lumen of the ER, controls the topology of multi-pass membrane proteins. This chain is Endoplasmic reticulum membrane protein complex subunit 10, found in Saccharomyces cerevisiae (strain ATCC 204508 / S288c) (Baker's yeast).